Here is a 288-residue protein sequence, read N- to C-terminus: Bifunctional protein FolD (288 aa).

NADP(+) contacts are provided by residues 166–168 (GAS) and Ile232.

This sequence belongs to the tetrahydrofolate dehydrogenase/cyclohydrolase family. As to quaternary structure, homodimer.

It catalyses the reaction (6R)-5,10-methylene-5,6,7,8-tetrahydrofolate + NADP(+) = (6R)-5,10-methenyltetrahydrofolate + NADPH. The enzyme catalyses (6R)-5,10-methenyltetrahydrofolate + H2O = (6R)-10-formyltetrahydrofolate + H(+). It participates in one-carbon metabolism; tetrahydrofolate interconversion. Functionally, catalyzes the oxidation of 5,10-methylenetetrahydrofolate to 5,10-methenyltetrahydrofolate and then the hydrolysis of 5,10-methenyltetrahydrofolate to 10-formyltetrahydrofolate. The protein is Bifunctional protein FolD of Escherichia coli (strain UTI89 / UPEC).